We begin with the raw amino-acid sequence, 194 residues long: Extracellular globin-E1 (194 aa).

Globin domains are found at residues 1 to 45 and 55 to 194; these read DISH…MGLS and GLSG…LRQA. Residue histidine 150 coordinates heme b.

The protein belongs to the globin family. In terms of assembly, artemia hemoglobin is a dimer of two similar sized subunits. Each subunit represents a globin chain which exists in two forms (alpha and beta), thus making possible three different phenotypes (HB1, alpha(2), HB2, alpha/beta, HB3, beta(2)). The globin chain is a polymer of eight heme-binding covalently linked domains.

This chain is Extracellular globin-E1, found in Artemia sp. (Brine shrimp).